Consider the following 587-residue polypeptide: Glutamine--tRNA ligase (587 aa).

The 'HIGH' region signature appears at 58–68 (PEPNGYLHIGH). Residues 59–61 (EPN) and 65–71 (HIGHAKS) each bind ATP. L-glutamine is bound by residues D91 and Y240. Residues T259 and 294-295 (RL) contribute to the ATP site. Positions 301 to 305 (VTSKR) match the 'KMSKS' region motif.

This sequence belongs to the class-I aminoacyl-tRNA synthetase family. Monomer.

It is found in the cytoplasm. It carries out the reaction tRNA(Gln) + L-glutamine + ATP = L-glutaminyl-tRNA(Gln) + AMP + diphosphate. The polypeptide is Glutamine--tRNA ligase (Bordetella bronchiseptica (strain ATCC BAA-588 / NCTC 13252 / RB50) (Alcaligenes bronchisepticus)).